The primary structure comprises 414 residues: Serine hydroxymethyltransferase (414 aa).

Residues L118 and 122–124 (GHL) each bind (6S)-5,6,7,8-tetrahydrofolate. K227 carries the post-translational modification N6-(pyridoxal phosphate)lysine. Residues E240 and 350–352 (SPF) each bind (6S)-5,6,7,8-tetrahydrofolate.

The protein belongs to the SHMT family. As to quaternary structure, homodimer. Requires pyridoxal 5'-phosphate as cofactor.

The protein resides in the cytoplasm. It carries out the reaction (6R)-5,10-methylene-5,6,7,8-tetrahydrofolate + glycine + H2O = (6S)-5,6,7,8-tetrahydrofolate + L-serine. The protein operates within one-carbon metabolism; tetrahydrofolate interconversion. It functions in the pathway amino-acid biosynthesis; glycine biosynthesis; glycine from L-serine: step 1/1. Functionally, catalyzes the reversible interconversion of serine and glycine with tetrahydrofolate (THF) serving as the one-carbon carrier. This reaction serves as the major source of one-carbon groups required for the biosynthesis of purines, thymidylate, methionine, and other important biomolecules. Also exhibits THF-independent aldolase activity toward beta-hydroxyamino acids, producing glycine and aldehydes, via a retro-aldol mechanism. The chain is Serine hydroxymethyltransferase from Bacillus thuringiensis (strain Al Hakam).